A 1063-amino-acid chain; its full sequence is Structural polyprotein (1063 aa).

The tract at residues 1 to 131 (MASTTPITME…LGPPTNPFQA (131 aa)) is disordered. The segment at 30 to 69 (GASQPRRPRPPRQRDSSTSGDDSGRDSGGPRRRRGNRGRG) is human C1QBP/SF2P32-binding. Serine 46 bears the Phosphoserine; by host mark. The segment covering 59–69 (PRRRRGNRGRG) has biased composition (basic residues). Positions 70–87 (QRKDWSRAPPPPEERQEG) are enriched in basic and acidic residues. The span at 93–107 (APKPSRAPPQQPQPP) shows a compositional bias: pro residues. Residues cysteine 153 and cysteine 197 are joined by a disulfide bond. The tract at residues 279–300 (GAPQAFLAGLLLAAVAVGTARA) is functions as E2 signal peptide. Topologically, residues 301–534 (GLQPRVDMAA…LWLATANALS (234 aa)) are extracellular. Asparagine 353, asparagine 371, and asparagine 429 each carry an N-linked (GlcNAc...) asparagine; by host glycan. Residues 535–555 (LDHALAAFVLLVPWVLIFMVC) form a helical membrane-spanning segment. Over 556–582 (RRACRRRGAAAALTAVVLQGYNPPAYG) the chain is Cytoplasmic. The functions as E1 signal peptide stretch occupies residues 563-582 (GAAAALTAVVLQGYNPPAYG). Residues 583–1028 (EEAFTYLCTA…QTWAEWAAAH (446 aa)) lie on the Extracellular side of the membrane. Intrachain disulfides connect cysteine 590–cysteine 595, cysteine 619–cysteine 824, cysteine 641–cysteine 653, cysteine 699–cysteine 712, cysteine 758–cysteine 767, cysteine 807–cysteine 817, cysteine 931–cysteine 934, and cysteine 950–cysteine 983. A glycan (N-linked (GlcNAc...) asparagine; by host) is linked at asparagine 658. Ca(2+) contacts are provided by asparagine 670 and alanine 671. 2 residues coordinate Ca(2+): aspartate 718 and threonine 719. Residue asparagine 791 is glycosylated (N-linked (GlcNAc...) asparagine; by host). O-linked (GalNAc...) threonine; by host glycosylation is found at threonine 1011 and threonine 1012. Residues 1029–1049 (WWQLTLGAICALPLAGLLACC) form a helical membrane-spanning segment. Residues 1050 to 1063 (AKCLYYLRGAIAPR) lie on the Extracellular side of the membrane.

Homodimer; further assembles into homooligomer. Interacts with human C1QBP. Interacts (via N-terminus) with protease/methyltransferase p150. In terms of assembly, heterodimer with spike glycoprotein E2. As to quaternary structure, heterodimer with spike glycoprotein E1. Post-translationally, structural polyprotein: Specific enzymatic cleavages in vivo yield mature proteins. Two signal peptidase-mediated cleavages within the polyprotein produce the structural proteins capsid, E2, and E1. The E2 signal peptide remains attached to the C-terminus of the capsid protein after cleavage by the signal peptidase. Another signal peptide at E2 C-terminus directs E1 to the ER, with a similar mechanism. Contains three N-linked oligosaccharides. In terms of processing, capsid is phosphorylated on Ser-46 by host. This phosphorylation negatively regulates capsid protein RNA-binding activity. Dephosphorylated by human PP1A.

The protein localises to the virion. The protein resides in the host cytoplasm. It is found in the host mitochondrion. It localises to the virion membrane. Its subcellular location is the host Golgi apparatus membrane. Its function is as follows. Capsid protein interacts with genomic RNA and assembles into icosahedric core particles 65-70 nm in diameter. The resulting nucleocapsid eventually associates with the cytoplasmic domain of E2 at the cell membrane, leading to budding and formation of mature virions from host Golgi membranes. Phosphorylation negatively regulates RNA-binding activity, possibly delaying virion assembly during the viral replication phase. Capsid protein dimerizes and becomes disulfide-linked in the virion. Modulates genomic RNA replication. Modulates subgenomic RNA synthesis by interacting with human C1QBP/SF2P32. Induces both perinuclear clustering of mitochondria and the formation of electron-dense intermitochondrial plaques, both hallmarks of rubella virus infected cells. Induces apoptosis when expressed in transfected cells. Functionally, responsible for viral attachment to target host cell, by binding to the cell receptor. Its transport to the plasma membrane depends on interaction with E1 protein. The surface glycoproteins display an irregular helical organization and a pseudo-tetrameric inner nucleocapsid arrangement. Class II viral fusion protein. Fusion activity is inactive as long as E1 is bound to E2 in mature virion. After virus attachment to target cell and clathrin-mediated endocytosis, acidification of the endosome would induce dissociation of E1/E2 heterodimer and concomitant trimerization of the E1 subunits. This E1 homotrimer is fusion active, and promotes release of viral nucleocapsid in cytoplasm after endosome and viral membrane fusion. The cytoplasmic tail of spike glycoprotein E1 modulates virus release. The surface glycoproteins display an irregular helical organization and a pseudo-tetrameric inner nucleocapsid arrangement. The protein is Structural polyprotein of Rubella virus (strain Cendehill) (RUBV).